Consider the following 609-residue polypeptide: Leukotriene A-4 hydrolase (609 aa).

A peptide contacts are provided by residues 131-133 and 263-268; these read QCQ and PYGGME. H292 lines the Zn(2+) pocket. E293 (proton acceptor) is an active-site residue. Zn(2+) contacts are provided by H296 and E315. The active-site Proton donor is Y380. A peptide is bound at residue 560 to 562; it reads RMK.

It belongs to the peptidase M1 family. As to quaternary structure, homodimer. Zn(2+) serves as cofactor. Expressed in oocytes.

Its subcellular location is the cytoplasm. The enzyme catalyses Release of the N-terminal residue from a tripeptide.. The catalysed reaction is leukotriene A4 + H2O = leukotriene B4. The protein operates within lipid metabolism; leukotriene B4 biosynthesis. The epoxide hydrolase activity is mildly restrained by suicide inactivation, possibly involving binding of LTA4 to Tyr-380. Bifunctional zinc metalloenzyme that comprises both epoxide hydrolase (EH) and aminopeptidase activities. Acts as an epoxide hydrolase to catalyze the conversion of leukotriene A4 (LTA4) to the pro-inflammatory mediator leukotriene B4 (LTB4). During the conversion of LTA4 to LTB4, a second product is formed, the isomeric delta6-trans-delta8-cis-LTB4 (5S,12R-dihydroxy-6,10-trans-8,14-cis-eicosatetraenoic acid), with a relative formation of 10% delta6-trans-delta8-cis-LTB4 compared to 90% LTB4. The production of delta6-trans-delta8-cis-LTB4 seems to depend on the phenylalanine residue at position 375. Also has aminopeptidase activity. In Xenopus laevis (African clawed frog), this protein is Leukotriene A-4 hydrolase.